The sequence spans 279 residues: Nucleotide-binding protein THA_1518 (279 aa).

9–16 (GLSGAGKS) is an ATP binding site. 57–60 (DARS) lines the GTP pocket.

Belongs to the RapZ-like family.

In terms of biological role, displays ATPase and GTPase activities. This Thermosipho africanus (strain TCF52B) protein is Nucleotide-binding protein THA_1518.